We begin with the raw amino-acid sequence, 813 residues long: MLRIVWKPLKIRLPVWRRYQSNISINSIRNVGIIAHIDAGKTTLTEKMLYYGGFTSHFGNVDTGDTVMDYLPAERQRGITINSAAISFTWRNQRINLIDTPGHADFTFEVERSVAVLDGAVAIIDGSAGVEAQTKVVWKQATKRGIPKVIFVNKMDRVGSSLGSTIRSIYTNLDCPYPLVLQLPVYSDGLQERKFLGILDILQQKMILWDTSDNKLGTDGTHVQELPIPESHMERFIEARNALVMSLCDVDETLCDEYLENEDSLAFTNDRLFKIIKQKTISGNVVPVLCGSSLKNIAVQPIMDAIIDYLPSPVEFYEKNASKETSSDKIISLDKRPLLAKIFKVIHHASRGILTYVRVNEGTLSRGMMMFNPRTKKSERAIRLYNVFADQTQEVDCISAGNIGVISGIKQFHTGDIIINKENSKNFHEYLSGNQSVISIPEPVCIASIEPYSLKDEPALLEALANMNREDPSFRYTQDLENGQLLIQGMGIMHLQVSYERLVSEFGARASLGKVQVGYRETLIDVSFNSVTLSTENKENLIINVYLIPISDEGDETLKKYFSEGEIQKVRSKGQEDGVLFYGWKPENSCTLPDHLSFQRIQENIYFGIVAGLSHGPLHGFPLTNLQSFCTISSFLSNDFPLSLLTQASMKATKNAVFSLYKRSPKSFRILEPYMDVTITTPEEYVGIVSKDLVGKRGATIKEITEIGKNAASKDSQIAIGILGERYLPADEPSSVKANNASSLLQSSSVIKCIRAQVPLEQILDYNSVISSLTKGNAKFLMSHPMESQTPKLVNYGSSFHPMSMQRQKRIFP.

The N-terminal 20 residues, 1–20 (MLRIVWKPLKIRLPVWRRYQ), are a transit peptide targeting the mitochondrion. In terms of domain architecture, tr-type G spans 26-314 (NSIRNVGIIA…AIIDYLPSPV (289 aa)). GTP is bound by residues 35-42 (AHIDAGKT), 99-103 (DTPGH), and 153-156 (NKMD).

The protein belongs to the TRAFAC class translation factor GTPase superfamily. Classic translation factor GTPase family. EF-G/EF-2 subfamily.

The protein resides in the mitochondrion. Its function is as follows. Mitochondrial GTPase that mediates the disassembly of ribosomes from messenger RNA at the termination of mitochondrial protein biosynthesis. Not involved in the GTP-dependent ribosomal translocation step during translation elongation. The polypeptide is Ribosome-releasing factor 2, mitochondrial (mef2) (Schizosaccharomyces pombe (strain 972 / ATCC 24843) (Fission yeast)).